We begin with the raw amino-acid sequence, 345 residues long: MIILGLETSCDETSAAVVQNGKVLSNIVSSQCCHTDFGGVVPELASREHERLMVAITDAALSEANITKNDLDVIAATAGPGLIGAVMVGLCFAQSMAWALQVPFVPVNHIEAHMFSPFIEAGAAKGVPEEPFISLTVSGGHTLLSIIGTDLSRRIIGRTLDDAAGEAFDKTGKMLGLSYPAGPEIDRLAKQGNPSFHRFPRALTAQSQTSKSYRGNYDFSFSGLKTSVLTWLQKQSPEYIDRHRADIAASIQDAIVSVLQEKTVAAALCHQINSIAIAGGVSANSALRAAMEKECSRQGIRLHLPGPVYSTDNAAMIAALCELQISRGMRPERRYSTAPFAGMPS.

Residues His109 and His113 each contribute to the Fe cation site. Residues 136 to 140 (TVSGG), Asp169, Gly182, Asp186, and Asn284 each bind substrate. Residue Asp312 coordinates Fe cation.

This sequence belongs to the KAE1 / TsaD family. Fe(2+) is required as a cofactor.

It localises to the cytoplasm. The enzyme catalyses L-threonylcarbamoyladenylate + adenosine(37) in tRNA = N(6)-L-threonylcarbamoyladenosine(37) in tRNA + AMP + H(+). In terms of biological role, required for the formation of a threonylcarbamoyl group on adenosine at position 37 (t(6)A37) in tRNAs that read codons beginning with adenine. Is involved in the transfer of the threonylcarbamoyl moiety of threonylcarbamoyl-AMP (TC-AMP) to the N6 group of A37, together with TsaE and TsaB. TsaD likely plays a direct catalytic role in this reaction. In Chlorobium phaeovibrioides (strain DSM 265 / 1930) (Prosthecochloris vibrioformis (strain DSM 265)), this protein is tRNA N6-adenosine threonylcarbamoyltransferase.